Reading from the N-terminus, the 689-residue chain is Glycine--tRNA ligase beta subunit (689 aa).

The protein belongs to the class-II aminoacyl-tRNA synthetase family. In terms of assembly, tetramer of two alpha and two beta subunits.

It is found in the cytoplasm. The catalysed reaction is tRNA(Gly) + glycine + ATP = glycyl-tRNA(Gly) + AMP + diphosphate. The polypeptide is Glycine--tRNA ligase beta subunit (Salmonella dublin (strain CT_02021853)).